The sequence spans 1032 residues: Connector enhancer of kinase suppressor of ras 2 (1032 aa).

One can recognise an SAM domain in the interval 11-76; sequence WSPSQVVDWM…LEAVDLLCAL (66 aa). S12 carries the phosphoserine modification. A CRIC domain is found at 84–178; that stretch reads NLKTLSHKLN…TIVQQDCTVY (95 aa). A PDZ domain is found at 215–297; it reads VIQLANIKPS…GVILTLKKRP (83 aa). The segment covering 324–340 has biased composition (low complexity); the sequence is RSPTSSVATPSSTISTP. Positions 324-349 are disordered; that stretch reads RSPTSSVATPSSTISTPTKRDSSALQ. A DUF1170 domain is found at 332-515; that stretch reads TPSSTISTPT…PTHYSLLPSL (184 aa). S338 and S390 each carry phosphoserine. Residues 480–509 form a disordered region; sequence EEYMFQRNSKKDTGKKSKKKGDKSTSPTHY. Positions 570-669 constitute a PH domain; that stretch reads RGDCEGWLWK…WLNRINMLTA (100 aa). The disordered stretch occupies residues 682–766; sequence DYWSESDKEE…PIRKTASQRR (85 aa). A Phosphotyrosine modification is found at Y683. Over residues 683-693 the composition is skewed to acidic residues; sequence YWSESDKEEAD. S685 and S687 each carry phosphoserine. Positions 701–714 are enriched in pro residues; the sequence is DSPPPPYDTYPRPP. Over residues 730–740 the composition is skewed to low complexity; it reads LSSTETSQSQS. Phosphoserine occurs at positions 756 and 767. Residues 866–900 are disordered; the sequence is DPQDDIQPPEVEEEEEEEEEEAAGENIGEKNENRE. Positions 874-917 form a coiled coil; it reads PEVEEEEEEEEEEAAGENIGEKNENREEKLGDSLQDLYRALEEA. Positions 875 to 888 are enriched in acidic residues; that stretch reads EVEEEEEEEEEEAA. Phosphoserine is present on S906.

Belongs to the CNKSR family. In terms of assembly, interacts with RAF1, RAB2L and RAL GTPase proteins. Interacts with DLG4 and AIP1. In terms of processing, phosphorylated on tyrosine. As to expression, expressed in neurons and localized in the cell body and neurites.

It localises to the cytoplasm. The protein localises to the membrane. Its function is as follows. May function as an adapter protein or regulator of Ras signaling pathways, in synaptic junctions. This Rattus norvegicus (Rat) protein is Connector enhancer of kinase suppressor of ras 2 (Cnksr2).